Here is a 300-residue protein sequence, read N- to C-terminus: Probable lipid kinase YegS-like (300 aa).

The DAGKc domain occupies 1 to 129 (MSKKALLILH…CDVIRVNNHY (129 aa)). ATP is bound by residues Thr-38, 64–70 (GDGSVRD), and Thr-92. Residues Leu-210, Asp-213, and Leu-215 each contribute to the Mg(2+) site. Glu-272 functions as the Proton acceptor in the catalytic mechanism.

Belongs to the diacylglycerol/lipid kinase family. YegS lipid kinase subfamily. The cofactor is Mg(2+). It depends on Ca(2+) as a cofactor.

It localises to the cytoplasm. In terms of biological role, probably phosphorylates lipids; the in vivo substrate is unknown. The sequence is that of Probable lipid kinase YegS-like from Alcanivorax borkumensis (strain ATCC 700651 / DSM 11573 / NCIMB 13689 / SK2).